The primary structure comprises 105 residues: uncharacterized protein (105 aa).

This is an uncharacterized protein from Paracoccus denitrificans.